Consider the following 551-residue polypeptide: Chaperonin GroEL (551 aa).

ATP is bound by residues 29-32 (TMGP), K50, 86-90 (DGTTT), G414, 478-480 (NAA), and D494.

It belongs to the chaperonin (HSP60) family. As to quaternary structure, forms a cylinder of 14 subunits composed of two heptameric rings stacked back-to-back. Interacts with the co-chaperonin GroES.

It is found in the cytoplasm. The enzyme catalyses ATP + H2O + a folded polypeptide = ADP + phosphate + an unfolded polypeptide.. Its function is as follows. Together with its co-chaperonin GroES, plays an essential role in assisting protein folding. The GroEL-GroES system forms a nano-cage that allows encapsulation of the non-native substrate proteins and provides a physical environment optimized to promote and accelerate protein folding. This chain is Chaperonin GroEL, found in Legionella jeonii.